The primary structure comprises 116 residues: Hydrogenase maturation factor HypA (116 aa).

His-2 provides a ligand contact to Ni(2+). Zn(2+)-binding residues include Cys-73, Cys-76, Cys-90, and Cys-93.

It belongs to the HypA/HybF family.

Its function is as follows. Involved in the maturation of [NiFe] hydrogenases. Required for nickel insertion into the metal center of the hydrogenase. The chain is Hydrogenase maturation factor HypA from Escherichia coli O6:H1 (strain CFT073 / ATCC 700928 / UPEC).